Consider the following 200-residue polypeptide: 3-isopropylmalate dehydratase small subunit (200 aa).

The protein belongs to the LeuD family. LeuD type 1 subfamily. In terms of assembly, heterodimer of LeuC and LeuD.

It carries out the reaction (2R,3S)-3-isopropylmalate = (2S)-2-isopropylmalate. It functions in the pathway amino-acid biosynthesis; L-leucine biosynthesis; L-leucine from 3-methyl-2-oxobutanoate: step 2/4. Catalyzes the isomerization between 2-isopropylmalate and 3-isopropylmalate, via the formation of 2-isopropylmaleate. The sequence is that of 3-isopropylmalate dehydratase small subunit from Histophilus somni (strain 129Pt) (Haemophilus somnus).